The sequence spans 361 residues: Protein-L-isoaspartate O-methyltransferase domain-containing protein 2 (361 aa).

Gly-2 carries N-myristoyl glycine lipidation. Ser-64 is a catalytic residue. AdoMet binding motif stretches follow at residues 85-94 (LNLGSGTGYL), 160-164 (YDRVY), and 181-191 (LKVGGILVMPL). Residues 240 to 250 (VRSLQDLARIA) form a BC-box region. Over residues 303 to 312 (SNPSDDNSSG) the composition is skewed to polar residues. The segment at 303-335 (SNPSDDNSSGDLEEERREEEATTPPDAKPEPPV) is disordered. Residues 345 to 348 (LPLP) form a CUL-box region.

This sequence belongs to the methyltransferase superfamily. L-isoaspartyl/D-aspartyl protein methyltransferase family.

The protein resides in the cytoplasm. Its function is as follows. May act as a substrate recognition component of an ECS (Elongin BC-CUL5-SOCS-box protein) E3 ubiquitin ligase complex which mediates the ubiquitination and subsequent proteasomal degradation of target proteins. May bind to the methyltransferase cofactor S-adenosylmethionine (AdoMet) via the N-terminal AdoMet binding motif, but probably does not display methyltransferase activity. This is Protein-L-isoaspartate O-methyltransferase domain-containing protein 2 (PCMTD2) from Bos taurus (Bovine).